A 174-amino-acid polypeptide reads, in one-letter code: Zinc finger AN1 domain-containing stress-associated protein 15 (174 aa).

The segment at 1–61 (MAQESCDLNK…TPPAAAAAAS (61 aa)) is disordered. A compositionally biased stretch (low complexity) spans 18-41 (PSSSSSPSPSPTTASPSPPTAQMT). A compositionally biased stretch (pro residues) spans 42 to 54 (EPPPPQSTPPTPP). The segment at 109–155 (VLFVNRCNVCRKRVGLTGFRCRCGELFCPRHRHSETHECSFDYKTAG) adopts an AN1-type zinc-finger fold. Positions 115, 118, 129, 131, 136, 139, 145, and 147 each coordinate Zn(2+).

Functionally, may be involved in environmental stress response. The sequence is that of Zinc finger AN1 domain-containing stress-associated protein 15 (SAP15) from Oryza sativa subsp. japonica (Rice).